Here is a 356-residue protein sequence, read N- to C-terminus: ATP-dependent 6-phosphofructokinase (356 aa).

ATP is bound by residues Gly-15, 78 to 79 (KG), and 115 to 118 (GEGT). Glu-116 is a Mg(2+) binding site. Substrate contacts are provided by residues 138-140 (TID), Arg-175, 182-184 (MGR), Glu-235, Arg-272, and 278-281 (HLQR). The Proton acceptor role is filled by Asp-140.

This sequence belongs to the phosphofructokinase type A (PFKA) family. Mixed-substrate PFK group III subfamily. Homodimer or homotetramer. It depends on Mg(2+) as a cofactor.

It is found in the cytoplasm. The catalysed reaction is beta-D-fructose 6-phosphate + ATP = beta-D-fructose 1,6-bisphosphate + ADP + H(+). The protein operates within carbohydrate degradation; glycolysis; D-glyceraldehyde 3-phosphate and glycerone phosphate from D-glucose: step 3/4. Functionally, catalyzes the phosphorylation of D-fructose 6-phosphate to fructose 1,6-bisphosphate by ATP, the first committing step of glycolysis. In Chloroflexus aurantiacus (strain ATCC 29366 / DSM 635 / J-10-fl), this protein is ATP-dependent 6-phosphofructokinase.